A 74-amino-acid polypeptide reads, in one-letter code: Kappa-stichotoxin-Hmg1a (74 aa).

An N-terminal signal peptide occupies residues 1–22 (MKSQMIAAVLLIAFCLCVVVTA). Residues 23–39 (RMELQDVEDMENGFQKR) constitute a propeptide that is removed on maturation. Residues 42–74 (CKDLIPVSECTDIRCRTSMKYRLNLCRKTCGSC) form the ShKT domain. 3 disulfides stabilise this stretch: Cys-42-Cys-74, Cys-51-Cys-67, and Cys-56-Cys-71.

This sequence belongs to the sea anemone type 1 potassium channel toxin family. Type 1a subfamily.

The protein localises to the secreted. It localises to the nematocyst. Its function is as follows. Potently blocks the voltage-gated potassium channel Kv1.1/KCNA1 (Ki=75 pM), KcsA (Ki~1 nM) and moderately blocks Kv1.2/KCNA2 (Ki=2.5 nM) and Kv1.3/KCNA3 (Ki=3.1 nM). Also facilitates acetylcholine release at the avian neuromuscular junction. Blockade and dissociation rate are sensitive to voltage. The protein is Kappa-stichotoxin-Hmg1a of Heteractis magnifica (Magnificent sea anemone).